Reading from the N-terminus, the 207-residue chain is Cilia- and flagella-associated protein 418 (207 aa).

Residues 1–75 form a required for interaction with FAM161A region; the sequence is MAEDLDELLD…LINEIFEEPH (75 aa).

Interacts (via N-terminus) with FAM161A (via central region); the interaction is direct. As to expression, expressed in the retina (at protein level).

It localises to the cytoplasm. The protein localises to the photoreceptor inner segment. May be involved in photoreceptor outer segment disk morphogenesis. In Bos taurus (Bovine), this protein is Cilia- and flagella-associated protein 418 (CFAP418).